A 428-amino-acid chain; its full sequence is Protein Wnt-8b (428 aa).

The N-terminal stretch at 1–22 (MFYTGSFWFIFFILPAIPFCHS) is a signal peptide. Cys54 and Cys65 are joined by a disulfide. 2 N-linked (GlcNAc...) asparagine glycosylation sites follow: Asn123 and Asn176. 10 disulfides stabilise this stretch: Cys177–Cys185, Cys187–Cys205, Cys253–Cys267, Cys255–Cys262, Cys329–Cys367, Cys345–Cys360, Cys364–Cys406, Cys382–Cys397, Cys384–Cys394, and Cys389–Cys390. Ser259 is lipidated: O-palmitoleoyl serine. A glycan (N-linked (GlcNAc...) asparagine) is linked at Asn332.

The protein belongs to the Wnt family. Post-translationally, palmitoleoylation is required for efficient binding to frizzled receptors. Depalmitoleoylation leads to Wnt signaling pathway inhibition. Proteolytic processing by tiki1 and tiki2 promotes oxidation and formation of large disulfide-bond oligomers, leading to inactivation of wnt8b. In terms of tissue distribution, in adults, in brain.

The protein localises to the secreted. Its subcellular location is the extracellular space. It is found in the extracellular matrix. Functionally, ligand for members of the frizzled family of seven transmembrane receptors. Plays a role in the initiation of dorsal axis development. May activate a Nieuwkoop center-like signaling pathway. This Xenopus laevis (African clawed frog) protein is Protein Wnt-8b (wnt8b).